We begin with the raw amino-acid sequence, 208 residues long: FMN-dependent NADH:quinone oxidoreductase (208 aa).

Residues 17–19 (SNS), 99–102 (MWNL), and 143–146 (SRGG) contribute to the FMN site.

It belongs to the azoreductase type 1 family. As to quaternary structure, homodimer. The cofactor is FMN.

It catalyses the reaction 2 a quinone + NADH + H(+) = 2 a 1,4-benzosemiquinone + NAD(+). The enzyme catalyses N,N-dimethyl-1,4-phenylenediamine + anthranilate + 2 NAD(+) = 2-(4-dimethylaminophenyl)diazenylbenzoate + 2 NADH + 2 H(+). In terms of biological role, quinone reductase that provides resistance to thiol-specific stress caused by electrophilic quinones. Also exhibits azoreductase activity. Catalyzes the reductive cleavage of the azo bond in aromatic azo compounds to the corresponding amines. This chain is FMN-dependent NADH:quinone oxidoreductase, found in Staphylococcus aureus (strain bovine RF122 / ET3-1).